A 148-amino-acid polypeptide reads, in one-letter code: 3-dehydroquinate dehydratase (148 aa).

Catalysis depends on Tyr24, which acts as the Proton acceptor. The substrate site is built by Asn80, His86, and Asp93. The active-site Proton donor is His106. Substrate-binding positions include 107–108 (IS) and Arg117.

The protein belongs to the type-II 3-dehydroquinase family. As to quaternary structure, homododecamer.

It carries out the reaction 3-dehydroquinate = 3-dehydroshikimate + H2O. Its pathway is metabolic intermediate biosynthesis; chorismate biosynthesis; chorismate from D-erythrose 4-phosphate and phosphoenolpyruvate: step 3/7. In terms of biological role, catalyzes a trans-dehydration via an enolate intermediate. The chain is 3-dehydroquinate dehydratase from Acidovorax ebreus (strain TPSY) (Diaphorobacter sp. (strain TPSY)).